The sequence spans 37 residues: Large ribosomal subunit protein bL36c (37 aa).

Belongs to the bacterial ribosomal protein bL36 family.

It is found in the plastid. The protein resides in the chloroplast. The protein is Large ribosomal subunit protein bL36c of Lotus japonicus (Lotus corniculatus var. japonicus).